A 208-amino-acid polypeptide reads, in one-letter code: Uracil phosphoribosyltransferase (208 aa).

Residues Arg78, Arg103, and 130–138 (DPMLATGGS) contribute to the 5-phospho-alpha-D-ribose 1-diphosphate site. Uracil-binding positions include Ile193 and 198–200 (GDA). Residue Asp199 participates in 5-phospho-alpha-D-ribose 1-diphosphate binding.

The protein belongs to the UPRTase family. The cofactor is Mg(2+).

The enzyme catalyses UMP + diphosphate = 5-phospho-alpha-D-ribose 1-diphosphate + uracil. Its pathway is pyrimidine metabolism; UMP biosynthesis via salvage pathway; UMP from uracil: step 1/1. Allosterically activated by GTP. In terms of biological role, catalyzes the conversion of uracil and 5-phospho-alpha-D-ribose 1-diphosphate (PRPP) to UMP and diphosphate. The sequence is that of Uracil phosphoribosyltransferase from Escherichia coli O139:H28 (strain E24377A / ETEC).